We begin with the raw amino-acid sequence, 651 residues long: Choline transporter-like protein 1 (651 aa).

Residues 1-25 (MGCCGSTQNSKRDWRPLEEHSCTDI) lie on the Cytoplasmic side of the membrane. The helical transmembrane segment at 26–46 (PWLLLFILFCVGMGFICGFSI) threads the bilayer. At 47–208 (ATGAASRLVF…RLISGVMTSK (162 aa)) the chain is on the extracellular side. Asn131 and Asn176 each carry an N-linked (GlcNAc...) asparagine glycan. Residues 209-229 (EIIMGLCLLSLVLSMILMVII) form a helical membrane-spanning segment. The Cytoplasmic segment spans residues 230–234 (RYISR). Residues 235–255 (VLVWIITILVVLGSLGGTGVL) traverse the membrane as a helical segment. At 256 to 284 (WWLYADNKKSLNENLPPDQLQVSKDNLQA) the chain is on the extracellular side. A helical membrane pass occupies residues 285–305 (LLVYAIAATVFTVILLLMMLI). Topologically, residues 306–311 (MRKRVA) are cytoplasmic. A helical membrane pass occupies residues 312 to 332 (LTIALFNVAGKVFIHLPLLVF). The Extracellular portion of the chain corresponds to 333-334 (QP). The chain crosses the membrane as a helical span at residues 335-355 (FWTFFALLLFWVYWVMVLLFL). At 356 to 376 (GTAGDPFTNEQGFVEFRINGP) the chain is on the cytoplasmic side. A helical membrane pass occupies residues 377–397 (LQYMWWYHLVGLIWISEFILA). Topologically, residues 398 to 438 (CQQMTIAGAVVTYYFTRNKNDLPFTPILASVNRLIRYHLGT) are extracellular. A helical transmembrane segment spans residues 439-459 (VAKGAFIITLVKIPRMILMYI). Topologically, residues 460 to 533 (HSQLKGKENA…RVAAINTVGD (74 aa)) are cytoplasmic. A helical transmembrane segment spans residues 534 to 554 (FMLFLGKILIVSCTGLAGIML). The Extracellular portion of the chain corresponds to 555 to 562 (LNYQRDYT). Residues 563–583 (VWVLPLIIVCLFAFLVAHCFL) traverse the membrane as a helical segment. Over 584 to 651 (SIYEMVVDVL…KPMASGTSTA (68 aa)) the chain is Cytoplasmic. The disordered stretch occupies residues 629–651 (LKEPGSTAEGRELKPMASGTSTA).

This sequence belongs to the CTL (choline transporter-like) family.

The protein localises to the cell membrane. It is found in the mitochondrion outer membrane. It catalyses the reaction choline(out) + n H(+)(in) = choline(in) + n H(+)(out). The enzyme catalyses ethanolamine(out) + n H(+)(in) = ethanolamine(in) + n H(+)(out). Choline/H+ antiporter. Also acts as a high-affinity ethanolamine/H+ antiporter, regulating the supply of extracellular ethanolamine (Etn) for the CDP-Etn pathway, redistribute intracellular Etn and balance the CDP-Cho and CDP-Etn arms of the Kennedy pathway. Involved in membrane synthesis and myelin production. The polypeptide is Choline transporter-like protein 1 (slc44a1) (Xenopus laevis (African clawed frog)).